A 184-amino-acid chain; its full sequence is U3 small nucleolar ribonucleoprotein protein IMP3 (184 aa).

Residues 109 to 175 (RRLPTVLLKL…IKRHVLEYNE (67 aa)) form the S4 RNA-binding domain.

This sequence belongs to the universal ribosomal protein uS4 family. In terms of assembly, part of the small subunit (SSU) processome, composed of more than 70 proteins and the RNA chaperone small nucleolar RNA (snoRNA) U3. Component of a heterotrimeric complex containing IMP3, IMP4 and MPHOSPH10. Interacts with MPHOSPH10.

It is found in the nucleus. The protein localises to the nucleolus. Its function is as follows. Component of the 60-80S U3 small nucleolar ribonucleoprotein (U3 snoRNP). Required for the early cleavages during pre-18S ribosomal RNA processing. Part of the small subunit (SSU) processome, first precursor of the small eukaryotic ribosomal subunit. During the assembly of the SSU processome in the nucleolus, many ribosome biogenesis factors, an RNA chaperone and ribosomal proteins associate with the nascent pre-rRNA and work in concert to generate RNA folding, modifications, rearrangements and cleavage as well as targeted degradation of pre-ribosomal RNA by the RNA exosome. In Homo sapiens (Human), this protein is U3 small nucleolar ribonucleoprotein protein IMP3.